Consider the following 321-residue polypeptide: GDP-L-fucose synthase (321 aa).

Position 14–20 (14–20 (GGSGLVG)) interacts with NADP(+). Catalysis depends on Tyr143, which acts as the Proton donor/acceptor. Residues Lys147, 170–173 (PTNV), and His186 each bind NADP(+). Substrate is bound by residues Lys194, Trp208, Arg215, and Asp277.

The protein belongs to the NAD(P)-dependent epimerase/dehydratase family. Fucose synthase subfamily. As to quaternary structure, homodimer.

It catalyses the reaction GDP-beta-L-fucose + NADP(+) = GDP-4-dehydro-alpha-D-rhamnose + NADPH + H(+). It participates in nucleotide-sugar biosynthesis; GDP-L-fucose biosynthesis via de novo pathway; GDP-L-fucose from GDP-alpha-D-mannose: step 2/2. Catalyzes the two-step NADP-dependent conversion of GDP-4-dehydro-6-deoxy-D-mannose to GDP-fucose, involving an epimerase and a reductase reaction. This is GDP-L-fucose synthase from Mus musculus (Mouse).